A 971-amino-acid chain; its full sequence is uncharacterized protein (971 aa).

13 helical membrane-spanning segments follow: residues 11-31 (WLLKIGIILVLAFLGLFGIIF), 516-536 (FASSFIALGVIILLATIALGI), 547-567 (LALALSAISSLAFFSAVGGVV), 569-589 (VFSFVGIFFVVAVNIINLITL), 615-635 (FFTMIETHICWLLSALVVIYL), 651-671 (AITSYFLNYGLGVILVWLFVS), 727-747 (LLFIWLTVLAFGVVMLGLYLG), 763-783 (STGIMLGVGVISLLYLLYSLP), 795-815 (IALILLAAGLFGAMYLANFIF), 817-837 (IDQSTIQLIIFVYLFWLFFQA), 878-898 (IGSSVLILLFIVYAAFNFGGI), 900-920 (GTINLVIFYLIAIVALFSVFV), and 923-943 (LPLFSFGLINGWLSPYNYVQI).

It localises to the cell membrane. This is an uncharacterized protein from Mycoplasma pneumoniae (strain ATCC 29342 / M129 / Subtype 1) (Mycoplasmoides pneumoniae).